The primary structure comprises 97 residues: YcgL domain-containing protein PSPPH_1548 (97 aa).

Residues 3 to 87 enclose the YcgL domain; it reads RICSIYRSPK…AEDDYIEHLP (85 aa).

In Pseudomonas savastanoi pv. phaseolicola (strain 1448A / Race 6) (Pseudomonas syringae pv. phaseolicola (strain 1448A / Race 6)), this protein is YcgL domain-containing protein PSPPH_1548.